The chain runs to 367 residues: Queuine tRNA-ribosyltransferase (367 aa).

The Proton acceptor role is filled by Asp92. Residues 92 to 96 (DSGGF), Asp146, Gln188, and Gly215 each bind substrate. Positions 246–252 (GVGTPKD) are RNA binding. Catalysis depends on Asp265, which acts as the Nucleophile. Positions 303, 305, 308, and 334 each coordinate Zn(2+).

It belongs to the queuine tRNA-ribosyltransferase family. In terms of assembly, homodimer. Within each dimer, one monomer is responsible for RNA recognition and catalysis, while the other monomer binds to the replacement base PreQ1. The cofactor is Zn(2+).

It carries out the reaction 7-aminomethyl-7-carbaguanine + guanosine(34) in tRNA = 7-aminomethyl-7-carbaguanosine(34) in tRNA + guanine. It functions in the pathway tRNA modification; tRNA-queuosine biosynthesis. In terms of biological role, catalyzes the base-exchange of a guanine (G) residue with the queuine precursor 7-aminomethyl-7-deazaguanine (PreQ1) at position 34 (anticodon wobble position) in tRNAs with GU(N) anticodons (tRNA-Asp, -Asn, -His and -Tyr). Catalysis occurs through a double-displacement mechanism. The nucleophile active site attacks the C1' of nucleotide 34 to detach the guanine base from the RNA, forming a covalent enzyme-RNA intermediate. The proton acceptor active site deprotonates the incoming PreQ1, allowing a nucleophilic attack on the C1' of the ribose to form the product. After dissociation, two additional enzymatic reactions on the tRNA convert PreQ1 to queuine (Q), resulting in the hypermodified nucleoside queuosine (7-(((4,5-cis-dihydroxy-2-cyclopenten-1-yl)amino)methyl)-7-deazaguanosine). The chain is Queuine tRNA-ribosyltransferase from Francisella tularensis subsp. novicida (strain U112).